Here is a 365-residue protein sequence, read N- to C-terminus: Endophilin-B1 (365 aa).

Met1 carries the N-acetylmethionine modification. The tract at residues 1–30 (MNIMDFNVKKLAADAGTFLSRAVQFTEEKL) is membrane-binding amphipathic helix. The tract at residues 1–37 (MNIMDFNVKKLAADAGTFLSRAVQFTEEKLGQAEKTE) is required for membrane binding. A BAR domain is found at 27-261 (EEKLGQAEKT…LGSFPSNYLS (235 aa)). A Phosphothreonine; by CDK5 modification is found at Thr145. Positions 155–186 (YKTIAKERKLLQNKRLDLDAAKTRLKKAKAAE) form a coiled coil. Residues 305–365 (SNNRKARVLY…VPITYLELLN (61 aa)) form the SH3 domain.

This sequence belongs to the endophilin family. As to quaternary structure, homodimer, and heterodimer with SH3GLB2. Binds BAX; induction of apoptosis augments BAX binding. Binds DNM1, HTT, AMPH, BIN1 and ARFGAP1. Interacts with UVRAG; UVRAG bridges the interaction to BECN1 indicative for an association with the PI3K complex II (PI3KC3-C2). Isoform 3 interacts with PPP1CC; this interaction leads to the inhibition of phosphatase activity. In terms of processing, phosphorylated at Thr-145 by CDK5; this phosphorylation is required for autophagy induction in starved neurons and facilitates homodimerization. Isoform 1 is widely expressed. Isoform 2 is brain-specific. Isoform 3 is predominantly expressed in testis, but it is also detected in liver and, at much lower levels, in skin, stomach and ovary.

The protein resides in the cytoplasm. It is found in the golgi apparatus membrane. The protein localises to the mitochondrion outer membrane. Its subcellular location is the cytoplasmic vesicle. It localises to the autophagosome membrane. The protein resides in the midbody. Its function is as follows. May be required for normal outer mitochondrial membrane dynamics. Required for coatomer-mediated retrograde transport in certain cells. May recruit other proteins to membranes with high curvature. May promote membrane fusion. Involved in activation of caspase-dependent apoptosis by promoting BAX/BAK1 activation. Isoform 1 acts proapoptotic in fibroblasts. Involved in caspase-independent apoptosis during nutrition starvation and involved in the regulation of autophagy. Activates lipid kinase activity of PIK3C3 during autophagy probably by associating with the PI3K complex II (PI3KC3-C2). Associated with PI3KC3-C2 during autophagy may regulate the trafficking of ATG9A from the Golgi complex to the peripheral cytoplasm for the formation of autophagosomes by inducing Golgi membrane tubulation and fragmentation. Involved in regulation of degradative endocytic trafficking and cytokinesis, probably in the context of PI3KC3-C2. Isoform 2 acts antiapoptotic in neuronal cells; involved in maintenance of mitochondrial morphology and promotes neuronal viability. In Mus musculus (Mouse), this protein is Endophilin-B1 (Sh3glb1).